Consider the following 58-residue polypeptide: Metallothionein-2B (58 aa).

A beta region spans residues 1–29; that stretch reads MPDPCCNDKCECKEGECKTGCKCKSCRCP. Cysteine 5, cysteine 6, cysteine 10, cysteine 12, cysteine 17, cysteine 21, cysteine 23, cysteine 26, cysteine 28, cysteine 31, cysteine 34, cysteine 38, cysteine 40, cysteine 46, cysteine 50, cysteine 54, cysteine 56, and cysteine 57 together coordinate a divalent metal cation. The alpha stretch occupies residues 30–58; sequence PCDKCSSECKCTSKEECSKTCSKPCSCCP.

It belongs to the metallothionein superfamily. Type 3 family.

Functionally, binds six divalent metal ions. Known to bind copper and cadmium. This chain is Metallothionein-2B, found in Callinectes sapidus (Blue crab).